A 90-amino-acid polypeptide reads, in one-letter code: UPF0335 protein Smed_2680 (90 aa).

This sequence belongs to the UPF0335 family.

This Sinorhizobium medicae (strain WSM419) (Ensifer medicae) protein is UPF0335 protein Smed_2680.